The primary structure comprises 88 residues: Putative membrane protein insertion efficiency factor (88 aa).

The protein belongs to the UPF0161 family.

It localises to the cell inner membrane. Its function is as follows. Could be involved in insertion of integral membrane proteins into the membrane. This is Putative membrane protein insertion efficiency factor from Burkholderia vietnamiensis (strain G4 / LMG 22486) (Burkholderia cepacia (strain R1808)).